Reading from the N-terminus, the 251-residue chain is Triosephosphate isomerase (251 aa).

9–11 (NWK) lines the substrate pocket. Catalysis depends on His-96, which acts as the Electrophile. The active-site Proton acceptor is the Glu-168. Substrate-binding positions include Gly-174, Ser-214, and 235–236 (GG).

The protein belongs to the triosephosphate isomerase family. As to quaternary structure, homodimer.

The protein localises to the cytoplasm. It catalyses the reaction D-glyceraldehyde 3-phosphate = dihydroxyacetone phosphate. Its pathway is carbohydrate biosynthesis; gluconeogenesis. It functions in the pathway carbohydrate degradation; glycolysis; D-glyceraldehyde 3-phosphate from glycerone phosphate: step 1/1. Its function is as follows. Involved in the gluconeogenesis. Catalyzes stereospecifically the conversion of dihydroxyacetone phosphate (DHAP) to D-glyceraldehyde-3-phosphate (G3P). The polypeptide is Triosephosphate isomerase (Cytophaga hutchinsonii (strain ATCC 33406 / DSM 1761 / CIP 103989 / NBRC 15051 / NCIMB 9469 / D465)).